Consider the following 300-residue polypeptide: Acetylglutamate kinase (300 aa).

Substrate-binding positions include Gly73–Gly74, Arg95, and Asn197.

It belongs to the acetylglutamate kinase family. ArgB subfamily.

It localises to the cytoplasm. The enzyme catalyses N-acetyl-L-glutamate + ATP = N-acetyl-L-glutamyl 5-phosphate + ADP. The protein operates within amino-acid biosynthesis; L-arginine biosynthesis; N(2)-acetyl-L-ornithine from L-glutamate: step 2/4. Catalyzes the ATP-dependent phosphorylation of N-acetyl-L-glutamate. The sequence is that of Acetylglutamate kinase from Bordetella parapertussis (strain 12822 / ATCC BAA-587 / NCTC 13253).